The primary structure comprises 136 residues: Phospholipase A2 (136 aa).

Ca(2+)-binding residues include W8, G10, and G12. 5 disulfide bridges follow: C9/C31, C30/C70, C37/C63, C61/C95, and C105/C117. N16 is a glycosylation site (N-linked (GlcNAc...) asparagine). H34 is a catalytic residue. D35 is a Ca(2+) binding site. D64 is an active-site residue.

Belongs to the phospholipase A2 family. The cofactor is Ca(2+). As to expression, expressed by the venom gland.

It localises to the secreted. It catalyses the reaction a 1,2-diacyl-sn-glycero-3-phosphocholine + H2O = a 1-acyl-sn-glycero-3-phosphocholine + a fatty acid + H(+). Its function is as follows. PLA2 catalyzes the calcium-dependent hydrolysis of the 2-acyl groups in 3-sn-phosphoglycerides. This is Phospholipase A2 from Bombus terrestris (Buff-tailed bumblebee).